The chain runs to 168 residues: Probable deoxyuridine 5'-triphosphate nucleotidohydrolase (168 aa).

Belongs to the dCTP deaminase family. Archaeal dUTPase subfamily.

The enzyme catalyses dUTP + H2O = dUMP + diphosphate + H(+). It functions in the pathway pyrimidine metabolism; dUMP biosynthesis; dUMP from dCTP (dUTP route): step 2/2. Functionally, this enzyme is involved in nucleotide metabolism: it produces dUMP, the immediate precursor of thymidine nucleotides and it decreases the intracellular concentration of dUTP so that uracil cannot be incorporated into DNA. In Archaeoglobus fulgidus (strain ATCC 49558 / DSM 4304 / JCM 9628 / NBRC 100126 / VC-16), this protein is Probable deoxyuridine 5'-triphosphate nucleotidohydrolase.